We begin with the raw amino-acid sequence, 733 residues long: Acyl-coenzyme A oxidase (733 aa).

This sequence belongs to the acyl-CoA oxidase family. FAD is required as a cofactor.

The protein resides in the peroxisome. The catalysed reaction is a 2,3-saturated acyl-CoA + O2 = a (2E)-enoyl-CoA + H2O2. It participates in lipid metabolism; peroxisomal fatty acid beta-oxidation. The sequence is that of Acyl-coenzyme A oxidase (POX1) from Eremothecium gossypii (strain ATCC 10895 / CBS 109.51 / FGSC 9923 / NRRL Y-1056) (Yeast).